Here is a 106-residue protein sequence, read N- to C-terminus: UPF0060 membrane protein RHE_CH01408 (106 aa).

A run of 4 helical transmembrane segments spans residues 4–24 (IIYAFAAVFEIAGCFAFWAWL), 30–50 (AWWLAPGMISLALFAWLLTLV), 59–79 (FAAYGGIYILASLSWLWLIEG), and 86–106 (DIGGGLICLAGASVILFAPRA).

It belongs to the UPF0060 family.

It localises to the cell inner membrane. The protein is UPF0060 membrane protein RHE_CH01408 of Rhizobium etli (strain ATCC 51251 / DSM 11541 / JCM 21823 / NBRC 15573 / CFN 42).